The chain runs to 227 residues: Ribose-5-phosphate isomerase A (227 aa).

Residues T30–T33, D86–D89, and K99–A104 contribute to the substrate site. The active-site Proton acceptor is E108. K126 provides a ligand contact to substrate.

This sequence belongs to the ribose 5-phosphate isomerase family. As to quaternary structure, homodimer.

The catalysed reaction is aldehydo-D-ribose 5-phosphate = D-ribulose 5-phosphate. It functions in the pathway carbohydrate degradation; pentose phosphate pathway; D-ribose 5-phosphate from D-ribulose 5-phosphate (non-oxidative stage): step 1/1. Functionally, involved in the first step of the non-oxidative branch of the pentose phosphate pathway. It catalyzes the reversible conversion of ribose-5-phosphate to ribulose 5-phosphate. Can also act on D-ribose-5-diphosphate and D-ribose-5-triphosphate as substrate. The protein is Ribose-5-phosphate isomerase A of Thermus thermophilus (strain ATCC BAA-163 / DSM 7039 / HB27).